A 146-amino-acid polypeptide reads, in one-letter code: UPF0178 protein BCAH820_3075 (146 aa).

It belongs to the UPF0178 family.

The polypeptide is UPF0178 protein BCAH820_3075 (Bacillus cereus (strain AH820)).